Consider the following 78-residue polypeptide: Mandibular organ-inhibiting hormone 2 (78 aa).

3 disulfide bridges follow: Cys7–Cys44, Cys24–Cys40, and Cys27–Cys53.

It belongs to the arthropod CHH/MIH/GIH/VIH hormone family. In terms of tissue distribution, produced by the medulla terminalis X-organ in the eyestalks and transported to the sinus gland where it is stored and released.

Its subcellular location is the secreted. Functionally, represses the synthesis of methyl farnesoate, the precursor of insect juvenile hormone III in the mandibular organ. This Cancer pagurus (Rock crab) protein is Mandibular organ-inhibiting hormone 2.